The sequence spans 1074 residues: Pleckstrin homology domain-containing family M member 1 (1074 aa).

The 143-residue stretch at 40–182 folds into the RUN domain; it reads TSEDGDANTM…LSFELSYKSA (143 aa). Disordered stretches follow at residues 214 to 244, 272 to 336, and 382 to 454; these read QRKESLDSISHSSGSEDIEVQHSGHKIRRNR, LQEN…MFQT, and DEKQ…PPQE. Phosphoserine is present on serine 218. 2 stretches are compositionally biased toward polar residues: residues 313 to 329 and 393 to 404; these read SKAQVNSAPSSGPNQEP and PAQSTSDQQPSS. A phosphoserine mark is found at serine 433, serine 436, and serine 491. Residues 506–526 form a disordered region; sequence GNAQPAPAPAPAPAPAPAPAP. A compositionally biased stretch (pro residues) spans 511-525; the sequence is APAPAPAPAPAPAPA. Positions 551–642 constitute a PH 1 domain; that stretch reads GLMKLGTVAR…WLDRVREALQ (92 aa). The LIR motif lies at 649–655; it reads EDEWVNI. The segment at 661–680 is disordered; sequence AEDAPEAPPDSLPPYSTLLP. Positions 672–1074 are interaction with RAB7A; the sequence is LPPYSTLLPE…RKYQEQNVVS (403 aa). In terms of domain architecture, PH 2 spans 701-795; that stretch reads DAIKESLLYL…WRDLVRKVLA (95 aa). A Phorbol-ester/DAG-type zinc finger spans residues 1004 to 1058; the sequence is QHVYHCDLCTQRGFICQICHHQDIIFPFEFDTTVRCAECRTVFHQSCQAVVRKGC.

Interacts (via N- and C-terminus) with RAB7A (GTP-bound form). Simultaneously interacts with RAB7A and ARL8B; bringing about clustering and fusion of late endosomes and lysosomes. Interacts (via RUN domain) with ARL8B (GTP-bound form); the interaction is required for PLEKHM1 localization to lysosomes and for ARL8B function in delivery and degradation of endocytic and autophagic cargo in lysosomes. PLEKHM1 and PLEKHM2 compete for interaction with ARL8B. Interacts with ARL8A; the interaction is weaker than with ARL8B. Interacts with VPS41, VPS11, VPS18, VPS33A and VPS39; indicative for an association with the HOPS complex; the interactions with, at least, VPS41, VPS11, VPS18 and VPS33A require ARL8B. Interacts with GABARAP, GABARAPL, GABARAPL2, MAP1LC3A, MAP1LC3B and MAP1LC3C. Interacts with PAFAH1B. Interacts (via N- and C-terminus) with NDEL1. Interacts (via C-terminus) with MAP3K7. Interacts (via N- and C-terminus) with FAM98A. Interacts (via C-terminus) with DEF8; this interaction is weak but increased in a RAB7A-dependent manner. May interact with sialyl-lex-positive protein.

It is found in the autolysosome membrane. The protein localises to the endosome membrane. The protein resides in the late endosome membrane. Its subcellular location is the lysosome membrane. Its function is as follows. Acts as a multivalent adapter protein that regulates Rab7-dependent and HOPS complex-dependent fusion events in the endolysosomal system and couples autophagic and the endocytic trafficking pathways. Acts as a dual effector of RAB7A and ARL8B that simultaneously binds these GTPases, bringing about clustering and fusion of late endosomes and lysosomes. Required for late stages of endolysosomal maturation, facilitating both endocytosis-mediated degradation of growth factor receptors and autophagosome clearance. Interaction with Arl8b is a crucial factor in the terminal maturation of autophagosomes and to mediate autophagosome-lysosome fusion. Positively regulates lysosome peripheral distribution and ruffled border formation in osteoclasts. May be involved in negative regulation of endocytic transport from early endosome to late endosome/lysosome implicating its association with Rab7. May have a role in sialyl-lex-mediated transduction of apoptotic signals. Involved in bone resorption. In Mus musculus (Mouse), this protein is Pleckstrin homology domain-containing family M member 1.